Reading from the N-terminus, the 190-residue chain is CASP-like protein 1E2 (190 aa).

A compositionally biased stretch (low complexity) spans 1–12 (MENEGKNNMNGM). Positions 1 to 24 (MENEGKNNMNGMEMEKGKRESRSR) are disordered. Residues 1–28 (MENEGKNNMNGMEMEKGKRESRSRKGVE) are Cytoplasmic-facing. The span at 13 to 24 (EMEKGKRESRSR) shows a compositional bias: basic and acidic residues. Residues 29-49 (LTMRVLALVLTMAAATVLGVA) traverse the membrane as a helical segment. Residues 50 to 83 (KQTKVVSIKLIPALPPLDITTTAKASYLSAFVYN) lie on the Extracellular side of the membrane. Residues 84–104 (ISANAIACGYTAISIAILMIS) form a helical membrane-spanning segment. Residues 105-111 (RGRRSKK) lie on the Cytoplasmic side of the membrane. Residues 112-132 (LLMAVLLGDLVMVALLFSGTG) traverse the membrane as a helical segment. Over 133–163 (AASAIGLMGLQGNKHVMWNKVCGVFGKFCHR) the chain is Extracellular. A helical membrane pass occupies residues 164–184 (AAPSLPLTFLAAVVFMFLVVL). At 185-190 (DAIKLP) the chain is on the cytoplasmic side.

Belongs to the Casparian strip membrane proteins (CASP) family. In terms of assembly, homodimer and heterodimers.

Its subcellular location is the cell membrane. This chain is CASP-like protein 1E2, found in Arabidopsis lyrata subsp. lyrata (Lyre-leaved rock-cress).